Here is a 544-residue protein sequence, read N- to C-terminus: Chaperonin GroEL (544 aa).

ATP contacts are provided by residues threonine 30–proline 33, lysine 51, aspartate 87–threonine 91, glycine 415, and aspartate 495.

This sequence belongs to the chaperonin (HSP60) family. As to quaternary structure, forms a cylinder of 14 subunits composed of two heptameric rings stacked back-to-back. Interacts with the co-chaperonin GroES.

The protein localises to the cytoplasm. It catalyses the reaction ATP + H2O + a folded polypeptide = ADP + phosphate + an unfolded polypeptide.. Functionally, together with its co-chaperonin GroES, plays an essential role in assisting protein folding. The GroEL-GroES system forms a nano-cage that allows encapsulation of the non-native substrate proteins and provides a physical environment optimized to promote and accelerate protein folding. The chain is Chaperonin GroEL from Agrobacterium fabrum (strain C58 / ATCC 33970) (Agrobacterium tumefaciens (strain C58)).